The chain runs to 861 residues: Leucine--tRNA ligase (861 aa).

The 'HIGH' region signature appears at 42 to 52 (PYPSGNLHMGH). The 'KMSKS' region signature appears at 620–624 (KMSKS). Residue Lys623 coordinates ATP.

The protein belongs to the class-I aminoacyl-tRNA synthetase family.

It is found in the cytoplasm. It carries out the reaction tRNA(Leu) + L-leucine + ATP = L-leucyl-tRNA(Leu) + AMP + diphosphate. The chain is Leucine--tRNA ligase from Baumannia cicadellinicola subsp. Homalodisca coagulata.